The primary structure comprises 266 residues: Putative carbamate hydrolase RutD (266 aa).

In terms of domain architecture, AB hydrolase-1 spans 14–115 (PVVVLISGLG…TMLVSVNGWL (102 aa)).

The protein belongs to the AB hydrolase superfamily. Hydrolase RutD family.

It carries out the reaction carbamate + 2 H(+) = NH4(+) + CO2. Its function is as follows. Involved in pyrimidine catabolism. May facilitate the hydrolysis of carbamate, a reaction that can also occur spontaneously. This Shigella flexneri serotype X (strain 2002017) protein is Putative carbamate hydrolase RutD.